The following is a 67-amino-acid chain: DNA gyrase inhibitor YacG (67 aa).

Residues C10, C13, C29, and C33 each contribute to the Zn(2+) site.

The protein belongs to the DNA gyrase inhibitor YacG family. Interacts with GyrB. Zn(2+) is required as a cofactor.

Inhibits all the catalytic activities of DNA gyrase by preventing its interaction with DNA. Acts by binding directly to the C-terminal domain of GyrB, which probably disrupts DNA binding by the gyrase. In Pasteurella multocida (strain Pm70), this protein is DNA gyrase inhibitor YacG.